A 507-amino-acid chain; its full sequence is Chromosomal replication initiator protein DnaA (507 aa).

The interval 1 to 112 is domain I, interacts with DnaA modulators; that stretch reads MTDDPGSGFT…PATDEADDTT (112 aa). Residues 99–162 form a disordered region; that stretch reads RIAPPATDEA…ERPRNTDSAT (64 aa). A compositionally biased stretch (polar residues) spans 113 to 127; that stretch reads VPPSENPATTSPDTT. Positions 113-166 are domain II; the sequence is VPPSENPATTSPDTTTDNDEIDDSAAARGDNQHSWPSYFTERPRNTDSATAGVT. The segment at 167–383 is domain III, AAA+ region; it reads SLNRRYTFDT…GALIRVTAFA (217 aa). 4 residues coordinate ATP: G211, G213, K214, and T215. The segment at 384-507 is domain IV, binds dsDNA; it reads SLNKTPIDKA…TTRIRQRSKR (124 aa).

It belongs to the DnaA family. As to quaternary structure, oligomerizes as a right-handed, spiral filament on DNA at oriC.

It localises to the cytoplasm. Functionally, plays an essential role in the initiation and regulation of chromosomal replication. ATP-DnaA binds to the origin of replication (oriC) to initiate formation of the DNA replication initiation complex once per cell cycle. Binds the DnaA box (a 9 base pair repeat at the origin) and separates the double-stranded (ds)DNA. Forms a right-handed helical filament on oriC DNA; dsDNA binds to the exterior of the filament while single-stranded (ss)DNA is stabiized in the filament's interior. The ATP-DnaA-oriC complex binds and stabilizes one strand of the AT-rich DNA unwinding element (DUE), permitting loading of DNA polymerase. After initiation quickly degrades to an ADP-DnaA complex that is not apt for DNA replication. Binds acidic phospholipids. This is Chromosomal replication initiator protein DnaA from Mycobacterium bovis (strain ATCC BAA-935 / AF2122/97).